The primary structure comprises 246 residues: Probable transcriptional regulatory protein HS_0508 (246 aa).

This sequence belongs to the TACO1 family.

The protein resides in the cytoplasm. This Histophilus somni (strain 129Pt) (Haemophilus somnus) protein is Probable transcriptional regulatory protein HS_0508.